The following is a 302-amino-acid chain: MEGFLCDRLLDAAQPIAERFRALFSLRNLRGDAPRRALLQAARDSSNLLAHEAAFALGQMQDAEAIPALEAVLKDLSLHPIVRHEAAEALGAIGLEKSISLLEESLAVDPAVEVQETCELAIRRIEEQKNTSGVESATVSPFLSVDPALPAKQGLPVEQLRELLLNEQESMYERYAALFALRNDSGDAAVSAIVAALGVKSALLRHEVAYVLGQLQNKAASDALSTVLKNVDEHPMVRHEAAEALGSIADQESIALLEEFAKDPEPIVSQSCEVALSMLEYERSGKAFEFLFPQTPQVQQES.

HEAT-like PBS-type repeat units follow at residues 49–75 (LAHE…VLKD), 82–108 (VRHE…SLAV), 171–200 (MYER…LGVK), 204–230 (LRHE…VLKN), and 237–263 (VRHE…FAKD). Residues histidine 51, glutamate 52, histidine 84, and glutamate 85 each coordinate Fe cation. Residues histidine 206, glutamate 207, histidine 239, and glutamate 240 each coordinate Fe cation.

Belongs to the deoxyhypusine hydroxylase family. The cofactor is Fe(2+).

The catalysed reaction is [eIF5A protein]-deoxyhypusine + AH2 + O2 = [eIF5A protein]-hypusine + A + H2O. It participates in protein modification; eIF5A hypusination. Its function is as follows. Catalyzes the hydroxylation of the N(6)-(4-aminobutyl)-L-lysine intermediate to form hypusine, an essential post-translational modification only found in mature eIF-5A factor. The sequence is that of Deoxyhypusine hydroxylase-B from Oryza sativa subsp. japonica (Rice).